Consider the following 485-residue polypeptide: ATP synthase subunit beta (485 aa).

G158–T165 serves as a coordination point for ATP.

The protein belongs to the ATPase alpha/beta chains family. In terms of assembly, F-type ATPases have 2 components, CF(1) - the catalytic core - and CF(0) - the membrane proton channel. CF(1) has five subunits: alpha(3), beta(3), gamma(1), delta(1), epsilon(1). CF(0) has four main subunits: a(1), b(1), b'(1) and c(9-12).

Its subcellular location is the cell inner membrane. It carries out the reaction ATP + H2O + 4 H(+)(in) = ADP + phosphate + 5 H(+)(out). Produces ATP from ADP in the presence of a proton gradient across the membrane. The catalytic sites are hosted primarily by the beta subunits. This Erythrobacter litoralis (strain HTCC2594) protein is ATP synthase subunit beta.